The chain runs to 529 residues: T-complex protein 1 subunit beta (529 aa).

The protein belongs to the TCP-1 chaperonin family. As to quaternary structure, heterooligomeric complex of about 850 to 900 kDa that forms two stacked rings, 12 to 16 nm in diameter.

It localises to the cytoplasm. In terms of biological role, molecular chaperone; assists the folding of proteins upon ATP hydrolysis. Known to play a role, in vitro, in the folding of actin and tubulin. This chain is T-complex protein 1 subunit beta (cct-2), found in Caenorhabditis elegans.